The following is a 163-amino-acid chain: Small ribosomal subunit protein bS6 (163 aa).

Residues 97-163 (EEGQTAMLTN…GRNEGEGDRA (67 aa)) are disordered. Basic and acidic residues predominate over residues 122 to 163 (RGPRRDFGDRGPRRDFGDRGPRRDGDGPRAEGGRNEGEGDRA).

The protein belongs to the bacterial ribosomal protein bS6 family.

Binds together with bS18 to 16S ribosomal RNA. In Rhodospirillum centenum (strain ATCC 51521 / SW), this protein is Small ribosomal subunit protein bS6.